The chain runs to 304 residues: Acetyl-coenzyme A carboxylase carboxyl transferase subunit beta (304 aa).

The CoA carboxyltransferase N-terminal domain occupies 23–292 (VWTKCDSCGQ…PNPEAPREGV (270 aa)). Zn(2+) contacts are provided by Cys27, Cys30, Cys46, and Cys49. Residues 27 to 49 (CDSCGQVLYRAELERNLEVCPKC) form a C4-type zinc finger. The interval 284 to 304 (NPEAPREGVVVPPVPDQEPEA) is disordered. Positions 295 to 304 (PPVPDQEPEA) are enriched in pro residues.

The protein belongs to the AccD/PCCB family. Acetyl-CoA carboxylase is a heterohexamer composed of biotin carboxyl carrier protein (AccB), biotin carboxylase (AccC) and two subunits each of ACCase subunit alpha (AccA) and ACCase subunit beta (AccD). Zn(2+) serves as cofactor.

Its subcellular location is the cytoplasm. It catalyses the reaction N(6)-carboxybiotinyl-L-lysyl-[protein] + acetyl-CoA = N(6)-biotinyl-L-lysyl-[protein] + malonyl-CoA. It functions in the pathway lipid metabolism; malonyl-CoA biosynthesis; malonyl-CoA from acetyl-CoA: step 1/1. Its function is as follows. Component of the acetyl coenzyme A carboxylase (ACC) complex. Biotin carboxylase (BC) catalyzes the carboxylation of biotin on its carrier protein (BCCP) and then the CO(2) group is transferred by the transcarboxylase to acetyl-CoA to form malonyl-CoA. The protein is Acetyl-coenzyme A carboxylase carboxyl transferase subunit beta of Shigella flexneri serotype 5b (strain 8401).